Reading from the N-terminus, the 211-residue chain is LexA repressor (211 aa).

The segment at residues 31-51 (RAEISKELGFRSPNAAEEHLK) is a DNA-binding region (H-T-H motif). Catalysis depends on for autocatalytic cleavage activity residues Ser-127 and Lys-164.

This sequence belongs to the peptidase S24 family. As to quaternary structure, homodimer.

The catalysed reaction is Hydrolysis of Ala-|-Gly bond in repressor LexA.. In terms of biological role, represses a number of genes involved in the response to DNA damage (SOS response), including recA and lexA. In the presence of single-stranded DNA, RecA interacts with LexA causing an autocatalytic cleavage which disrupts the DNA-binding part of LexA, leading to derepression of the SOS regulon and eventually DNA repair. This Pasteurella multocida (strain Pm70) protein is LexA repressor.